A 271-amino-acid polypeptide reads, in one-letter code: Monalysin (271 aa).

Residues 1–33 constitute a propeptide that is removed on maturation; sequence MTIKEELGQPQSHSIELDEVSKEAASTRAALTS. Residues 102 to 170 are pore-forming domain; sequence IPQNVTTTLS…FTDTTEMKGP (69 aa).

In terms of assembly, pro-Monalysin forms a stable donut-like 18-mer complex composed of two disk-shaped nonamers held together by N-terminal swapping of the pro-peptides. After proteolytic cleavage, the inactive 18-mer complex probably dissociates into two disk-shaped active nonamers in which the transmembrane segments are unmasked and ready to engage the conformational change leading to the pore formation into the target membrane. Multimerizes into circular-like structures and barrel-like aggregates. Post-translationally, requires N-terminal cleavage to become fully active. The metalloprotease AprA can induce the rapid cleavage of pro-Monalysin into its active form. Can also be processed by trypsin.

It localises to the secreted. It is found in the host cell membrane. In terms of biological role, pore-forming toxin that contributes to the virulence of P.entomophila against Drosophila, playing an important role in host intestinal damage and lethality. Displays cytolytic and hemolytic activity. This chain is Monalysin, found in Pseudomonas entomophila (strain L48).